The chain runs to 380 residues: Anhydro-N-acetylmuramic acid kinase (380 aa).

G17 to D24 contributes to the ATP binding site.

Belongs to the anhydro-N-acetylmuramic acid kinase family.

The catalysed reaction is 1,6-anhydro-N-acetyl-beta-muramate + ATP + H2O = N-acetyl-D-muramate 6-phosphate + ADP + H(+). It functions in the pathway amino-sugar metabolism; 1,6-anhydro-N-acetylmuramate degradation. Its pathway is cell wall biogenesis; peptidoglycan recycling. Catalyzes the specific phosphorylation of 1,6-anhydro-N-acetylmuramic acid (anhMurNAc) with the simultaneous cleavage of the 1,6-anhydro ring, generating MurNAc-6-P. Is required for the utilization of anhMurNAc either imported from the medium or derived from its own cell wall murein, and thus plays a role in cell wall recycling. This is Anhydro-N-acetylmuramic acid kinase from Cupriavidus metallidurans (strain ATCC 43123 / DSM 2839 / NBRC 102507 / CH34) (Ralstonia metallidurans).